The chain runs to 215 residues: 3-isopropylmalate dehydratase small subunit (215 aa).

This sequence belongs to the LeuD family. LeuD type 1 subfamily. Heterodimer of LeuC and LeuD.

The enzyme catalyses (2R,3S)-3-isopropylmalate = (2S)-2-isopropylmalate. Its pathway is amino-acid biosynthesis; L-leucine biosynthesis; L-leucine from 3-methyl-2-oxobutanoate: step 2/4. Functionally, catalyzes the isomerization between 2-isopropylmalate and 3-isopropylmalate, via the formation of 2-isopropylmaleate. The protein is 3-isopropylmalate dehydratase small subunit of Acinetobacter baumannii (strain AB307-0294).